Consider the following 621-residue polypeptide: UvrABC system protein C (621 aa).

Residues 13 to 92 form the GIY-YIG domain; it reads EKPGVYLMKN…IKKYRPRYNI (80 aa). The UVR domain occupies 204–239; the sequence is NEVINDLKIKMEKASSELKFEEAASFRDKLLAVEKI.

Belongs to the UvrC family. In terms of assembly, interacts with UvrB in an incision complex.

It is found in the cytoplasm. Functionally, the UvrABC repair system catalyzes the recognition and processing of DNA lesions. UvrC both incises the 5' and 3' sides of the lesion. The N-terminal half is responsible for the 3' incision and the C-terminal half is responsible for the 5' incision. The sequence is that of UvrABC system protein C from Clostridium novyi (strain NT).